Reading from the N-terminus, the 414-residue chain is tRNA N6-adenosine threonylcarbamoyltransferase, mitochondrial (414 aa).

The N-terminal 29 residues, 1–29 (MLMLRRTAGAIPKPPKSKVYGFLRRFSVH), are a transit peptide targeting the mitochondrion. N6-acetyllysine occurs at positions 74 and 140. Residues His-147 and His-151 each contribute to the a divalent metal cation site. Residues 169–173 (LISGG) and Asp-202 each bind substrate. Lys-203 carries the post-translational modification N6-acetyllysine. The substrate site is built by Gly-222 and Glu-226. N6-acetyllysine is present on residues Lys-230 and Lys-299. Substrate is bound by residues 329-330 (SN) and Thr-357. Asp-358 serves as a coordination point for a divalent metal cation.

It belongs to the KAE1 / TsaD family. In terms of assembly, monomer. The cofactor is a divalent metal cation.

The protein localises to the mitochondrion. It carries out the reaction L-threonylcarbamoyladenylate + adenosine(37) in tRNA = N(6)-L-threonylcarbamoyladenosine(37) in tRNA + AMP + H(+). In terms of biological role, required for the formation of a threonylcarbamoyl group on adenosine at position 37 (t(6)A37) in mitochondrial tRNAs that read codons beginning with adenine. Probably involved in the transfer of the threonylcarbamoyl moiety of threonylcarbamoyl-AMP (TC-AMP) to the N6 group of A37. Involved in mitochondrial genome maintenance. This is tRNA N6-adenosine threonylcarbamoyltransferase, mitochondrial from Mus musculus (Mouse).